A 201-amino-acid polypeptide reads, in one-letter code: Probable molybdenum cofactor guanylyltransferase (201 aa).

Residues 16 to 18 (LAG), lysine 28, aspartate 75, and aspartate 107 contribute to the GTP site. Residue aspartate 107 coordinates Mg(2+).

The protein belongs to the MobA family. Mg(2+) is required as a cofactor.

Its subcellular location is the cytoplasm. The catalysed reaction is Mo-molybdopterin + GTP + H(+) = Mo-molybdopterin guanine dinucleotide + diphosphate. Transfers a GMP moiety from GTP to Mo-molybdopterin (Mo-MPT) cofactor (Moco or molybdenum cofactor) to form Mo-molybdopterin guanine dinucleotide (Mo-MGD) cofactor. The polypeptide is Probable molybdenum cofactor guanylyltransferase (Mycobacterium bovis (strain ATCC BAA-935 / AF2122/97)).